The chain runs to 52 residues: Phospholamban (52 aa).

At Met-1 the chain carries N-acetylmethionine. Residues 1–31 (MEKVQYLTRSAIRRASTIEMPQQARQNLQNL) lie on the Cytoplasmic side of the membrane. Ser-16 bears the Phosphoserine; by PKA mark. The residue at position 17 (Thr-17) is a Phosphothreonine; by CaMK2. A helical membrane pass occupies residues 32–52 (FINFCLILICLLLICIIVMLL). The S-palmitoyl cysteine moiety is linked to residue Cys-36.

It belongs to the phospholamban family. Homopentamer. Can also form heterooligomers with other sarcoplasmic/endoplasmic reticulum calcium ATPase (SERCA) regulators ARLN, ERLN, SLN and STRIT1/DWORF. Monomer. Interacts with HAX1. Interacts as a monomer with ATP2A2; the interaction decreases ATP2A2 Ca(2+) affinity. Interacts with VMP1; VMP1 competes with PLN and SLN to prevent them from forming an inhibitory complex with ATP2A2. Interacts with S100A1 in a Ca(2+)-dependent manner. Phosphorylated at Thr-17 by CaMK2, and in response to beta-adrenergic stimulation. Phosphorylation by DMPK may stimulate sarcoplasmic reticulum calcium uptake in cardiomyocytes. Phosphorylation by PKA abolishes the inhibition of ATP2A2-mediated calcium uptake. Post-translationally, palmitoylated by ZDHHC16, promoting formation of the homopentamer. In terms of processing, in elongated spermatids, proteolytically cleaved by SPPL2C which modulates intracellular Ca(2+) homeostasis. In terms of tissue distribution, expressed in testis (at protein level). In brain, expressed specifically in GABAergic GAD67+ neurons of the thalamic reticular nucleus where it colocalizes with ATP2A2/SERCA2 (at protein level). Expressed in the bladder and in the atria and ventricles of the heart.

Its subcellular location is the endoplasmic reticulum membrane. The protein resides in the sarcoplasmic reticulum membrane. It is found in the mitochondrion membrane. It localises to the membrane. In terms of biological role, reversibly inhibits the activity of ATP2A2/SERCA2 in cardiac sarcoplasmic reticulum by decreasing the apparent affinity of the ATPase for Ca(2+). Binds preferentially to the ATP-bound E1 conformational form of ATP2A2 which predominates at low Ca(2+) concentrations during the diastolic phase of the cardiac cycle. Inhibits ATP2A2 Ca(2+) affinity by disrupting its allosteric activation by ATP. Modulates the contractility of the heart muscle in response to physiological stimuli via its effects on ATP2A2. Modulates calcium re-uptake during muscle relaxation and plays an important role in calcium homeostasis in the heart muscle. The degree of ATP2A2 inhibition depends on the oligomeric state of PLN. ATP2A2 inhibition is alleviated by PLN phosphorylation. Also inhibits the activity of ATP2A3/SERCA3. Controls intracellular Ca(2+) levels in elongated spermatids and may play a role in germ cell differentiation. In the thalamic reticular nucleus of the brain, plays a role in the regulation of sleep patterns and executive functioning. The chain is Phospholamban from Mus musculus (Mouse).